We begin with the raw amino-acid sequence, 1141 residues long: Serine-aspartate repeat-containing protein E (1141 aa).

The N-terminal stretch at 1–52 (MINRDNKKAITKKGMISNRLNKFSIRKYTVGTASILVGTTLIFGLGNQEAKA) is a signal peptide. A YSIRK-G/S signaling motif motif is present at residues 23–34 (FSIRKYTVGTAS). The segment at 53–601 (AENTSTENAK…GDGTVKPEEK (549 aa)) is ligand binding A region. Residues 54–248 (ENTSTENAKQ…RSTKPVATAP (195 aa)) are disordered. Positions 61-75 (AKQDDATTSDNKEVV) are enriched in basic and acidic residues. Positions 77–90 (ETENNSTTENDSTN) are enriched in low complexity. Basic and acidic residues predominate over residues 92–108 (IKKETNTDSQPEAKEES). Low complexity predominate over residues 109 to 126 (TTSSTQQQQNNVTATTET). Over residues 130 to 145 (NIEKENVKPSTDKTAT) the composition is skewed to basic and acidic residues. A compositionally biased stretch (polar residues) spans 159–207 (NYTNNDVTTKPSTSEIQTKPTTPQESTNIENSQPQPTPSKVDNQVTDAT). Basic and acidic residues predominate over residues 216–241 (SKEELKNNPEKLKELVRNDNNTDRST). 3 CNA-B domains span residues 602-714 (LYKI…YKEP), 715-824 (KYNL…YKTP), and 825-935 (KYSL…EEDT). Positions 899 to 1117 (VTNTTEDDKD…GSENNGSNNA (219 aa)) are disordered. Composition is skewed to acidic residues over residues 903-913 (TEDDKDADGGE) and 930-1080 (YFEE…DSDS). The LPXTG sorting signal motif lies at 1104–1108 (LPETG). At T1107 the chain carries Pentaglycyl murein peptidoglycan amidated threonine. A propeptide spans 1108–1141 (GSENNGSNNATLFGGLFAALGSLLLFGRRKKQNK) (removed by sortase).

It belongs to the serine-aspartate repeat-containing protein (SDr) family. Interacts with host complement factor H/CFAH (via C-terminus). Interacts with host complement regulator C4BPA.

The protein localises to the secreted. It is found in the cell wall. Its function is as follows. Cell surface-associated calcium-binding protein which plays an important role in adhesion and pathogenesis. Contributes to the resistance to killing by innate immune components in blood and thus attenuates bacterial clearance by interacting with host complement factor H/CFAH and modulating its activity. Also inhibits bacterial opsonization and killing by interacting with host complement regulator C4BPA and thus inhibiting classical complement pathway activation. This chain is Serine-aspartate repeat-containing protein E (sdrE), found in Staphylococcus aureus (strain N315).